Here is a 297-residue protein sequence, read N- to C-terminus: Iron-sulfur cluster assembly SufBD family protein ycf24 (297 aa).

This sequence belongs to the iron-sulfur cluster assembly SufBD family.

It is found in the plastid. It localises to the chloroplast. The protein is Iron-sulfur cluster assembly SufBD family protein ycf24 (ycf24) of Antithamnion sp. (Red alga).